A 394-amino-acid chain; its full sequence is Protein LAX PANICLE 2 (394 aa).

Residues 1-193 (MVPARSLAHP…PTPRHHHHDV (193 aa)) are disordered. The span at 8-20 (AHPHPHLVRRRRD) shows a compositional bias: basic residues. Residues 60–84 (QHDPPKQPPPREADDDHHRIQEREP) show a composition bias toward basic and acidic residues. 3 stretches are compositionally biased toward low complexity: residues 90-101 (TTTRNQRLQLQL), 119-131 (GTSG…SSSN), and 146-155 (GPASPGASAG). The segment covering 170–185 (APQPPTPTPTPTPTPT) has biased composition (pro residues).

In terms of assembly, interacts with LAX1.

It is found in the nucleus. Its function is as follows. Involved in the regulation of shoot branching by controlling axillary meristem (AM) formation. Functions in association with LAX1 to regulate the process of AM formation. Possesses transactivation activity in yeast. In Oryza sativa subsp. japonica (Rice), this protein is Protein LAX PANICLE 2.